A 351-amino-acid chain; its full sequence is Uroporphyrinogen decarboxylase (351 aa).

Residues arginine 32–arginine 36, phenylalanine 51, aspartate 82, tyrosine 157, serine 211, and histidine 326 each bind substrate.

Belongs to the uroporphyrinogen decarboxylase family. In terms of assembly, homodimer.

The protein localises to the cytoplasm. It catalyses the reaction uroporphyrinogen III + 4 H(+) = coproporphyrinogen III + 4 CO2. The protein operates within porphyrin-containing compound metabolism; protoporphyrin-IX biosynthesis; coproporphyrinogen-III from 5-aminolevulinate: step 4/4. Functionally, catalyzes the decarboxylation of four acetate groups of uroporphyrinogen III to yield coproporphyrinogen III. The polypeptide is Uroporphyrinogen decarboxylase (Caulobacter vibrioides (strain ATCC 19089 / CIP 103742 / CB 15) (Caulobacter crescentus)).